A 108-amino-acid polypeptide reads, in one-letter code: Ig light chain C region (108 aa).

In terms of domain architecture, Ig-like spans 7–102 (PTVSIYCPSL…LTPALAKSFQ (96 aa)). Intrachain disulfides connect cysteine 13/cysteine 106 and cysteine 28/cysteine 86.

The sequence is that of Ig light chain C region from Aquarana catesbeiana (American bullfrog).